The following is a 96-amino-acid chain: Protein CLAVATA 3 (96 aa).

Residues 1-21 (MDSKSFLLLLLLFCFLFLHDA) form the signal peptide. The segment at 68-96 (ELRTVPSGPDPLHHHVNPPRQPRNNFQLP) is disordered. Residues Pro-73 and Pro-76 each carry the hydroxyproline modification. O-linked (Ara...) hydroxyproline glycosylation is present at Pro-76.

Belongs to the CLV3/ESR signal peptide family. In terms of assembly, interacts with the extracellular leucine-rich repeat region of CLV1. Interacts with CLV2. CLV3-derived CLE peptides interacts with a tetrameric complex made of two CLV2/CRN heterodimers. Post-translationally, the MCLV3 peptide contains two hydroxyprolines, but hydroxylation had no direct effect on MCLV3 activity. The O-glycosylation (arabinosylation) of the hydroxyproline P-76 enhances binding affinity of the MCLV3 peptide for its receptor. As to expression, first detected in heart stage embryos in a patch of cells between the developing cotyledons. In vegetative and inflorescence meristems, expressed in a small cone of cells at the meristem apex.

Its subcellular location is the secreted. The protein localises to the extracellular space. Extracellular signal that regulates meristem maintenance. Acts with CLV1 as a ligand-receptor pair in a signal transduction pathway coordinating growth between adjacent meristematic regions and controlling the balance between meristem cell proliferation and differentiation. Its function is as follows. The secreted peptide MCLV3 activates a signal transduction cascade to restrict WUSCHEL (WUS) expression, inducing shoot and root meristem consumption as cells differentiated into other organs. This is Protein CLAVATA 3 from Arabidopsis thaliana (Mouse-ear cress).